The chain runs to 393 residues: MTVPSTRKDLMIVNMGPHHPSMHGVLRLIVTLDGEDVIDCEPILGYLHRGMEKIAENRTIIQYLPYVTRWDYLATMFTEAITVNAPEQLGNIQVPKRASYIRVIMLELSRIASHLLWLGPFMADIGAQTPFFYIFRERELIYDLFEAATGMRMMHNFFRIGGVAADLPHGWIDKCLDFCDYFLTGIAEYQKLITRNPIFLERVEGVGIIGGEEAINWGLSGPMLRASGIEWDLRKVDHYECYDEFDWEVQWQKEGDSLARYLVRISEMTESIKIIQQALEGIPGGPYENLEIRRFDRVKDTVWNEFDYRFISKKPSPTFELSKQELYARVEAPKGELGIFLIGDKGVFPWRYKIRPPGFINLQILPQLVKRMKLADIMTILGSIDIIMGEVDR.

This sequence belongs to the complex I 49 kDa subunit family. In terms of assembly, NDH is composed of at least 16 different subunits, 5 of which are encoded in the nucleus.

It localises to the plastid. The protein resides in the chloroplast thylakoid membrane. It catalyses the reaction a plastoquinone + NADH + (n+1) H(+)(in) = a plastoquinol + NAD(+) + n H(+)(out). The enzyme catalyses a plastoquinone + NADPH + (n+1) H(+)(in) = a plastoquinol + NADP(+) + n H(+)(out). In terms of biological role, NDH shuttles electrons from NAD(P)H:plastoquinone, via FMN and iron-sulfur (Fe-S) centers, to quinones in the photosynthetic chain and possibly in a chloroplast respiratory chain. The immediate electron acceptor for the enzyme in this species is believed to be plastoquinone. Couples the redox reaction to proton translocation, and thus conserves the redox energy in a proton gradient. This chain is NAD(P)H-quinone oxidoreductase subunit H, chloroplastic, found in Helianthus annuus (Common sunflower).